The following is a 102-amino-acid chain: Small ribosomal subunit protein uS10 (102 aa).

It belongs to the universal ribosomal protein uS10 family. In terms of assembly, part of the 30S ribosomal subunit.

Functionally, involved in the binding of tRNA to the ribosomes. In Methanococcus maripaludis (strain C5 / ATCC BAA-1333), this protein is Small ribosomal subunit protein uS10.